Consider the following 76-residue polypeptide: Conotoxin MaIr332 (76 aa).

A signal peptide spans 1–21 (MKLTCVIVAVLFLTAWTFVTA). The propeptide occupies 22–48 (DDSGNGLENLFSKAHHEMKNPKDSKLN). Intrachain disulfides connect Cys51-Cys66, Cys58-Cys70, and Cys65-Cys75.

This sequence belongs to the conotoxin O1 superfamily. As to expression, expressed by the venom duct.

The protein localises to the secreted. This Conus marmoreus (Marble cone) protein is Conotoxin MaIr332.